The following is a 31-amino-acid chain: KGKGFWSWASKATSWLTGPQQPGSPLLKKHR.

Its subcellular location is the secreted. Inhibits a wide spectrum of lactic acid bacteria. The sequence is that of Bacteriocin leucocin-B from Leuconostoc mesenteroides.